We begin with the raw amino-acid sequence, 351 residues long: MVSFSEITTLGVGGSIACFIECSPDEFVERAPGLFRPGHHVLVVGGGSNLVASDCPFPGTVVRLKSRDTIISDDGNYTRFSVSAGTSWDDLVSYTLDLGFDQLSPMSGIPGTFGGALAQNISAYGAAVRDVLGSVEVYDACTSEVVTFGLEDMRYGYRTSALKNVRNKVILGGTLLLKPGPTPVLYRQLANALKVDLGTYCSGKQVRDQVLRIRAEKGMLPRYLVPKGFDVCNTSSVGSFFVNPIVSKEHLSRLRRLVPQGALNSSVIQTDEMGGVKVSAAFLLEQSGFEKGFCISGSQAAISTQHSLAIVNRGGATAAEVIELAGLITRTVSRKFDIHLIPEPVFVGLEL.

The 203-residue stretch at 11-213 folds into the FAD-binding PCMH-type domain; that stretch reads GVGGSIACFI…KQVRDQVLRI (203 aa). Residue Arg-158 is part of the active site. Residue Ser-239 is the Proton donor of the active site. The active site involves Glu-343.

Belongs to the MurB family. FAD is required as a cofactor.

It localises to the cytoplasm. The enzyme catalyses UDP-N-acetyl-alpha-D-muramate + NADP(+) = UDP-N-acetyl-3-O-(1-carboxyvinyl)-alpha-D-glucosamine + NADPH + H(+). The protein operates within cell wall biogenesis; peptidoglycan biosynthesis. Its function is as follows. Cell wall formation. This Tropheryma whipplei (strain TW08/27) (Whipple's bacillus) protein is UDP-N-acetylenolpyruvoylglucosamine reductase.